A 417-amino-acid polypeptide reads, in one-letter code: MFLQNILSVLAFALLIDAAPVKRSTGFVTLDFNVKRSLVDPKDPTVEVKRSPLFLDIEPTEIPVDDTGRNDVGKRGPVAVKLDNEIITYSADITIGSNNQKLSVIVDTGSSDLWVPDSNAVCIPKWPGDRGDFCKNNGSYSPAASSTSKNLNTPFEIKYADGSVAQGNLYQDTVGIGGVSVRDQLFANVRSTSAHKGILGIGFQSNEATRTPYDNLPITLKKQGIISKNAYSLFLNSPEASSGQIIFGGIDKAKYSGSLVDLPITSDRTLSVGLRSVNVMGQNVNVNAGVLLDSGTTISYFTPNIARSIIYALGGQVHYDSSGNEAYVADCKTSGTVDFQFDRNLKISVPASEFLYQLYYTNGEPYPKCEIRVRESEDNILGDNFMRSAYIVYDLDDRKISMAQVKYTSQSNIVGIN.

An N-terminal signal peptide occupies residues 1 to 18 (MFLQNILSVLAFALLIDA). Positions 19–75 (APVKRSTGFVTLDFNVKRSLVDPKDPTVEVKRSPLFLDIEPTEIPVDDTGRNDVGKR) are cleaved as a propeptide — activation peptide. The region spanning 89-403 (YSADITIGSN…DLDDRKISMA (315 aa)) is the Peptidase A1 domain. Residue D107 is part of the active site. Cysteines 122 and 134 form a disulfide. An N-linked (GlcNAc...) asparagine glycan is attached at N137. Residue D293 is part of the active site. A disulfide bond links C331 and C369.

Belongs to the peptidase A1 family. O-glycosylated.

It is found in the secreted. It catalyses the reaction Preferential cleavage at the carboxyl of hydrophobic amino acids, but fails to cleave 15-Leu-|-Tyr-16, 16-Tyr-|-Leu-17 and 24-Phe-|-Phe-25 of insulin B chain. Activates trypsinogen, and degrades keratin.. In Candida albicans (strain WO-1) (Yeast), this protein is Candidapepsin-4 (SAP4).